Reading from the N-terminus, the 257-residue chain is Thiazole synthase (257 aa).

Lysine 100 acts as the Schiff-base intermediate with DXP in catalysis. Residues glycine 161, alanine 187–glycine 188, and asparagine 209–threonine 210 contribute to the 1-deoxy-D-xylulose 5-phosphate site.

Belongs to the ThiG family. As to quaternary structure, homotetramer. Forms heterodimers with either ThiH or ThiS.

The protein resides in the cytoplasm. The catalysed reaction is [ThiS sulfur-carrier protein]-C-terminal-Gly-aminoethanethioate + 2-iminoacetate + 1-deoxy-D-xylulose 5-phosphate = [ThiS sulfur-carrier protein]-C-terminal Gly-Gly + 2-[(2R,5Z)-2-carboxy-4-methylthiazol-5(2H)-ylidene]ethyl phosphate + 2 H2O + H(+). Its pathway is cofactor biosynthesis; thiamine diphosphate biosynthesis. Catalyzes the rearrangement of 1-deoxy-D-xylulose 5-phosphate (DXP) to produce the thiazole phosphate moiety of thiamine. Sulfur is provided by the thiocarboxylate moiety of the carrier protein ThiS. In vitro, sulfur can be provided by H(2)S. In Zymomonas mobilis subsp. mobilis (strain ATCC 31821 / ZM4 / CP4), this protein is Thiazole synthase.